A 155-amino-acid chain; its full sequence is SsrA-binding protein (155 aa).

The protein belongs to the SmpB family.

The protein localises to the cytoplasm. In terms of biological role, required for rescue of stalled ribosomes mediated by trans-translation. Binds to transfer-messenger RNA (tmRNA), required for stable association of tmRNA with ribosomes. tmRNA and SmpB together mimic tRNA shape, replacing the anticodon stem-loop with SmpB. tmRNA is encoded by the ssrA gene; the 2 termini fold to resemble tRNA(Ala) and it encodes a 'tag peptide', a short internal open reading frame. During trans-translation Ala-aminoacylated tmRNA acts like a tRNA, entering the A-site of stalled ribosomes, displacing the stalled mRNA. The ribosome then switches to translate the ORF on the tmRNA; the nascent peptide is terminated with the 'tag peptide' encoded by the tmRNA and targeted for degradation. The ribosome is freed to recommence translation, which seems to be the essential function of trans-translation. In Lactococcus lactis subsp. cremoris (strain MG1363), this protein is SsrA-binding protein.